A 1034-amino-acid chain; its full sequence is Protein ITPRID1 (1034 aa).

Disordered stretches follow at residues 223–290 (KTQQ…PTKP), 442–486 (QVSS…KSMT), and 624–678 (QSSL…SSWS). 2 stretches are compositionally biased toward polar residues: residues 443–453 (VSSMTGSQSPT) and 465–476 (HSPASQQDSLQE). The span at 477-486 (SYGSKSKSMT) shows a compositional bias: low complexity. Residues 669 to 678 (TDSNAASSWS) are compositionally biased toward polar residues. Residues 843-902 (EMETMKMVCQSFREHLEEIEQHFMGQQALYPRDMSEEEREEAEYLRTLREALRQQVAELA) adopt a coiled-coil conformation.

This is Protein ITPRID1 (Itprid1) from Mus musculus (Mouse).